The sequence spans 728 residues: Beta-porphyranase A (728 aa).

The N-terminal stretch at Met-1 to Cys-22 is a signal peptide. 6 residues coordinate substrate: His-53, Lys-76, Trp-78, Lys-87, His-114, and Asn-151. The active-site Proton donor is Glu-152. Substrate-binding residues include His-235, Glu-279, Ser-326, and Trp-331. Glu-279 functions as the Nucleophile in the catalytic mechanism. In terms of domain architecture, CBM-cenC spans Thr-599 to Val-701.

This sequence belongs to the glycosyl hydrolase 86 family.

It carries out the reaction Hydrolysis of beta-D-galactopyranose-(1-&gt;4)-alpha-L-galactopyranose-6-sulfate linkages in porphyran.. Its function is as follows. Cleaves the sulfated polysaccharide porphyran at the (1-&gt;4) linkages between beta-D-galactopyranose and alpha-L-galactopyranose-6-sulfate, forming mostly the disaccharide alpha-L-galactopyranose-6-sulfate-(1-&gt;3)-beta-D-galactose. Some longer oligosaccharides of even number of residues are also observed. Inactive on the non-sulfated agarose portion of the porphyran backbone. Can also use methylated galactoses. This Phocaeicola plebeius (strain DSM 17135 / JCM 12973 / CCUG 54634 / M2) (Bacteroides plebeius) protein is Beta-porphyranase A.